A 391-amino-acid chain; its full sequence is Elongation factor Tu (391 aa).

In terms of domain architecture, tr-type G spans 10–201 (KPHVNIGTIG…AVDDYIPTPA (192 aa)). The interval 19–26 (GHVDHGKT) is G1. 19-26 (GHVDHGKT) is a GTP binding site. Threonine 26 lines the Mg(2+) pocket. The tract at residues 55–59 (GITIS) is G2. The G3 stretch occupies residues 76–79 (DCPG). Residues 76–80 (DCPGH) and 131–134 (NKVD) each bind GTP. The interval 131–134 (NKVD) is G4. The interval 169 to 171 (SAL) is G5.

The protein belongs to the TRAFAC class translation factor GTPase superfamily. Classic translation factor GTPase family. EF-Tu/EF-1A subfamily. As to quaternary structure, monomer.

Its subcellular location is the cytoplasm. The catalysed reaction is GTP + H2O = GDP + phosphate + H(+). Its function is as follows. GTP hydrolase that promotes the GTP-dependent binding of aminoacyl-tRNA to the A-site of ribosomes during protein biosynthesis. This Dinoroseobacter shibae (strain DSM 16493 / NCIMB 14021 / DFL 12) protein is Elongation factor Tu.